The following is a 116-amino-acid chain: UPF0102 protein PERMA_0362 (116 aa).

This sequence belongs to the UPF0102 family.

This is UPF0102 protein PERMA_0362 from Persephonella marina (strain DSM 14350 / EX-H1).